The sequence spans 145 residues: Early nodulin-like protein 21 (145 aa).

Residues 1–17 form the signal peptide; sequence MFLWLVIVLTISASVSS. One can recognise a Phytocyanin domain in the interval 18–116; it reads YEHKLNWVVP…GQKMIVEVIS (99 aa). Asparagine 30 and asparagine 71 each carry an N-linked (GlcNAc...) asparagine glycan. A disulfide bond links cysteine 70 and cysteine 104. Serine 116 is lipidated: GPI-anchor amidated serine. The propeptide at 117–145 is removed in mature form; sequence RDHTTTSAAPPAAFAVLLCFFSLSLYFVA.

Belongs to the early nodulin-like (ENODL) family. Mostly expressed in leaves and flowers, and, to a lower extent, in roots and stems, but barely in seedlings and seeds.

The protein resides in the cell membrane. In terms of biological role, may act as a carbohydrate transporter. The protein is Early nodulin-like protein 21 of Arabidopsis thaliana (Mouse-ear cress).